Consider the following 524-residue polypeptide: Inosine-5'-monophosphate dehydrogenase 4 (524 aa).

CBS domains are found at residues 122-183 and 185-241; these read FINS…VVSE and MTKN…PLAS. The residue at position 125 (serine 125) is a Phosphoserine. Residues 279–281 and 329–331 contribute to the NAD(+) site; these read DSS and GMG. K(+) contacts are provided by glycine 331 and glycine 333. Residue serine 334 participates in IMP binding. A K(+)-binding site is contributed by cysteine 336. The Thioimidate intermediate role is filled by cysteine 336. Residues 369–371, 392–393, and 416–420 each bind IMP; these read DGG, GG, and YRGMG. The active-site Proton acceptor is the arginine 438. Residue glutamine 450 participates in IMP binding. K(+) contacts are provided by glutamate 509, glycine 510, and glycine 511.

This sequence belongs to the IMPDH/GMPR family. In terms of assembly, homotetramer. Seems to be able to form heterotetramers composed from more than 1 of the 3 IMPDH gene products (IMD2-4). K(+) serves as cofactor.

It is found in the cytoplasm. The enzyme catalyses IMP + NAD(+) + H2O = XMP + NADH + H(+). It participates in purine metabolism; XMP biosynthesis via de novo pathway; XMP from IMP: step 1/1. Mycophenolic acid (MPA) is a non-competitive inhibitor that prevents formation of the closed enzyme conformation by binding to the same site as the amobile flap. In contrast, mizoribine monophosphate (MZP) is a competitive inhibitor that induces the closed conformation. MPA is a potent inhibitor of mammalian IMPDHs but a poor inhibitor of the bacterial enzymes. MZP is a more potent inhibitor of bacterial IMPDH. In terms of biological role, catalyzes the conversion of inosine 5'-phosphate (IMP) to xanthosine 5'-phosphate (XMP), the first committed and rate-limiting step in the de novo synthesis of guanine nucleotides, and therefore plays an important role in the regulation of cell growth. The polypeptide is Inosine-5'-monophosphate dehydrogenase 4 (Saccharomyces cerevisiae (strain ATCC 204508 / S288c) (Baker's yeast)).